A 242-amino-acid polypeptide reads, in one-letter code: 1-(5-phosphoribosyl)-5-[(5-phosphoribosylamino)methylideneamino] imidazole-4-carboxamide isomerase (242 aa).

Asp7 acts as the Proton acceptor in catalysis. Asp129 serves as the catalytic Proton donor.

Belongs to the HisA/HisF family.

Its subcellular location is the cytoplasm. It catalyses the reaction 1-(5-phospho-beta-D-ribosyl)-5-[(5-phospho-beta-D-ribosylamino)methylideneamino]imidazole-4-carboxamide = 5-[(5-phospho-1-deoxy-D-ribulos-1-ylimino)methylamino]-1-(5-phospho-beta-D-ribosyl)imidazole-4-carboxamide. Its pathway is amino-acid biosynthesis; L-histidine biosynthesis; L-histidine from 5-phospho-alpha-D-ribose 1-diphosphate: step 4/9. This Pseudoalteromonas translucida (strain TAC 125) protein is 1-(5-phosphoribosyl)-5-[(5-phosphoribosylamino)methylideneamino] imidazole-4-carboxamide isomerase.